Here is a 53-residue protein sequence, read N- to C-terminus: uncharacterized protein (53 aa).

The chain crosses the membrane as a helical span at residues 4–23; the sequence is STLIIIASNVVTVFVSVAVN. Residues 24 to 50 adopt a coiled-coil conformation; the sequence is RTDISWLKQRLISLEERINKLGEKHVF.

It localises to the host membrane. This is an uncharacterized protein from Pseudoalteromonas phage PM2 (Bacteriophage PM2).